The following is a 156-amino-acid chain: ATP synthase subunit b', chloroplastic (156 aa).

Residues 24-44 (ATLPLVAIQFILLMVLLNILL) form a helical membrane-spanning segment.

This sequence belongs to the ATPase B chain family. F-type ATPases have 2 components, F(1) - the catalytic core - and F(0) - the membrane proton channel. F(1) has five subunits: alpha(3), beta(3), gamma(1), delta(1), epsilon(1). F(0) has four main subunits: a(1), b(1), b'(1) and c(10-14). The alpha and beta chains form an alternating ring which encloses part of the gamma chain. F(1) is attached to F(0) by a central stalk formed by the gamma and epsilon chains, while a peripheral stalk is formed by the delta, b and b' chains.

The protein resides in the plastid. The protein localises to the chloroplast thylakoid membrane. Functionally, f(1)F(0) ATP synthase produces ATP from ADP in the presence of a proton or sodium gradient. F-type ATPases consist of two structural domains, F(1) containing the extramembraneous catalytic core and F(0) containing the membrane proton channel, linked together by a central stalk and a peripheral stalk. During catalysis, ATP synthesis in the catalytic domain of F(1) is coupled via a rotary mechanism of the central stalk subunits to proton translocation. In terms of biological role, component of the F(0) channel, it forms part of the peripheral stalk, linking F(1) to F(0). The b'-subunit is a diverged and duplicated form of b found in plants and photosynthetic bacteria. The sequence is that of ATP synthase subunit b', chloroplastic from Phaeodactylum tricornutum (strain CCAP 1055/1).